Reading from the N-terminus, the 329-residue chain is Glycerol-3-phosphate dehydrogenase [NAD(P)+] (329 aa).

Residues Tyr-14, Arg-34, and Lys-108 each coordinate NADPH. Sn-glycerol 3-phosphate is bound by residues Lys-108, Gly-137, and Ser-139. Ala-141 is an NADPH binding site. Sn-glycerol 3-phosphate contacts are provided by Lys-192, Asp-245, Ser-255, Arg-256, and Asn-257. The active-site Proton acceptor is Lys-192. An NADPH-binding site is contributed by Arg-256. 2 residues coordinate NADPH: Ile-280 and Glu-282.

Belongs to the NAD-dependent glycerol-3-phosphate dehydrogenase family.

The protein resides in the cytoplasm. It carries out the reaction sn-glycerol 3-phosphate + NAD(+) = dihydroxyacetone phosphate + NADH + H(+). The catalysed reaction is sn-glycerol 3-phosphate + NADP(+) = dihydroxyacetone phosphate + NADPH + H(+). It functions in the pathway membrane lipid metabolism; glycerophospholipid metabolism. Catalyzes the reduction of the glycolytic intermediate dihydroxyacetone phosphate (DHAP) to sn-glycerol 3-phosphate (G3P), the key precursor for phospholipid synthesis. The chain is Glycerol-3-phosphate dehydrogenase [NAD(P)+] from Wigglesworthia glossinidia brevipalpis.